A 443-amino-acid polypeptide reads, in one-letter code: Ribulose bisphosphate carboxylase large chain (443 aa).

Lys7 carries the post-translational modification N6,N6,N6-trimethyllysine. Substrate-binding residues include Asn116 and Thr166. The Proton acceptor role is filled by Lys168. Lys170 contacts substrate. The Mg(2+) site is built by Lys194, Asp196, and Glu197. Lys194 is modified (N6-carboxylysine). The active-site Proton acceptor is the His287. Substrate-binding residues include Arg288, His320, and Ser372.

This sequence belongs to the RuBisCO large chain family. Type I subfamily. As to quaternary structure, heterohexadecamer of 8 large chains and 8 small chains; disulfide-linked. The disulfide link is formed within the large subunit homodimers. Mg(2+) is required as a cofactor. In terms of processing, the disulfide bond which can form in the large chain dimeric partners within the hexadecamer appears to be associated with oxidative stress and protein turnover.

The protein localises to the plastid. It localises to the chloroplast. The catalysed reaction is 2 (2R)-3-phosphoglycerate + 2 H(+) = D-ribulose 1,5-bisphosphate + CO2 + H2O. It catalyses the reaction D-ribulose 1,5-bisphosphate + O2 = 2-phosphoglycolate + (2R)-3-phosphoglycerate + 2 H(+). Its function is as follows. RuBisCO catalyzes two reactions: the carboxylation of D-ribulose 1,5-bisphosphate, the primary event in carbon dioxide fixation, as well as the oxidative fragmentation of the pentose substrate in the photorespiration process. Both reactions occur simultaneously and in competition at the same active site. This Abies homolepis (Nikko fir) protein is Ribulose bisphosphate carboxylase large chain.